Here is a 384-residue protein sequence, read N- to C-terminus: Chaperone protein DnaJ (384 aa).

The region spanning 5-69 (DYYKVLGVDR…QKRAQYDQFG (65 aa)) is the J domain. The CR-type zinc-finger motif lies at 141 to 223 (GKKTQVSYTR…CGGKGTVERK (83 aa)). C154, C157, C171, C174, C197, C200, C211, and C214 together coordinate Zn(2+). 4 CXXCXGXG motif repeats span residues 154-161 (CETCGGNG), 171-178 (CDKCHGTG), 197-204 (CDKCNGRG), and 211-218 (CKTCGGKG).

This sequence belongs to the DnaJ family. In terms of assembly, homodimer. It depends on Zn(2+) as a cofactor.

It is found in the cytoplasm. In terms of biological role, participates actively in the response to hyperosmotic and heat shock by preventing the aggregation of stress-denatured proteins and by disaggregating proteins, also in an autonomous, DnaK-independent fashion. Unfolded proteins bind initially to DnaJ; upon interaction with the DnaJ-bound protein, DnaK hydrolyzes its bound ATP, resulting in the formation of a stable complex. GrpE releases ADP from DnaK; ATP binding to DnaK triggers the release of the substrate protein, thus completing the reaction cycle. Several rounds of ATP-dependent interactions between DnaJ, DnaK and GrpE are required for fully efficient folding. Also involved, together with DnaK and GrpE, in the DNA replication of plasmids through activation of initiation proteins. The sequence is that of Chaperone protein DnaJ from Lactobacillus acidophilus (strain ATCC 700396 / NCK56 / N2 / NCFM).